Here is a 493-residue protein sequence, read N- to C-terminus: Adenylyltransferase and sulfurtransferase uba4 (493 aa).

ATP is bound by residues Gly-99, Asp-120, Ser-127–Arg-131, Lys-144, and Asp-188–Asn-189. The Zn(2+) site is built by Cys-237 and Cys-240. Cys-254 acts as the Glycyl thioester intermediate; for adenylyltransferase activity in catalysis. Zn(2+) contacts are provided by Cys-316 and Cys-319. Residues Ile-376–Pro-491 form the Rhodanese domain. The active-site Cysteine persulfide intermediate; for sulfurtransferase activity is Cys-446.

It in the N-terminal section; belongs to the HesA/MoeB/ThiF family. UBA4 subfamily. The cofactor is Zn(2+).

It localises to the cytoplasm. Its subcellular location is the cytosol. The catalysed reaction is [molybdopterin-synthase sulfur-carrier protein]-C-terminal Gly-Gly + ATP + H(+) = [molybdopterin-synthase sulfur-carrier protein]-C-terminal Gly-Gly-AMP + diphosphate. It carries out the reaction [molybdopterin-synthase sulfur-carrier protein]-C-terminal Gly-Gly-AMP + S-sulfanyl-L-cysteinyl-[cysteine desulfurase] + AH2 = [molybdopterin-synthase sulfur-carrier protein]-C-terminal-Gly-aminoethanethioate + L-cysteinyl-[cysteine desulfurase] + A + AMP + 2 H(+). The protein operates within tRNA modification; 5-methoxycarbonylmethyl-2-thiouridine-tRNA biosynthesis. It functions in the pathway cofactor biosynthesis; molybdopterin biosynthesis. Its function is as follows. Plays a central role in 2-thiolation of mcm(5)S(2)U at tRNA wobble positions of cytosolic tRNA(Lys), tRNA(Glu) and tRNA(Gln). Also essential during biosynthesis of the molybdenum cofactor. Acts by mediating the C-terminal thiocarboxylation of sulfur carriers urm1 and mocs2a. Its N-terminus first activates urm1 and mocs2a as acyl-adenylates (-COAMP), then the persulfide sulfur on the catalytic cysteine is transferred to urm1 and mocs2a to form thiocarboxylation (-COSH) of their C-terminus. The reaction probably involves hydrogen sulfide that is generated from the persulfide intermediate and that acts as a nucleophile towards urm1 and mocs2a. Subsequently, a transient disulfide bond is formed. Does not use thiosulfate as sulfur donor; nfs1 probably acting as a sulfur donor for thiocarboxylation reactions. The polypeptide is Adenylyltransferase and sulfurtransferase uba4 (Aspergillus fumigatus (strain ATCC MYA-4609 / CBS 101355 / FGSC A1100 / Af293) (Neosartorya fumigata)).